Reading from the N-terminus, the 84-residue chain is ATP synthase subunit c (84 aa).

Helical transmembrane passes span 10–30 (IAVA…FAIL) and 53–73 (FIVA…ALFF).

This sequence belongs to the ATPase C chain family. In terms of assembly, F-type ATPases have 2 components, F(1) - the catalytic core - and F(0) - the membrane proton channel. F(1) has five subunits: alpha(3), beta(3), gamma(1), delta(1), epsilon(1). F(0) has three main subunits: a(1), b(2) and c(10-14). The alpha and beta chains form an alternating ring which encloses part of the gamma chain. F(1) is attached to F(0) by a central stalk formed by the gamma and epsilon chains, while a peripheral stalk is formed by the delta and b chains.

The protein localises to the cell inner membrane. Its function is as follows. F(1)F(0) ATP synthase produces ATP from ADP in the presence of a proton or sodium gradient. F-type ATPases consist of two structural domains, F(1) containing the extramembraneous catalytic core and F(0) containing the membrane proton channel, linked together by a central stalk and a peripheral stalk. During catalysis, ATP synthesis in the catalytic domain of F(1) is coupled via a rotary mechanism of the central stalk subunits to proton translocation. Key component of the F(0) channel; it plays a direct role in translocation across the membrane. A homomeric c-ring of between 10-14 subunits forms the central stalk rotor element with the F(1) delta and epsilon subunits. The sequence is that of ATP synthase subunit c from Shewanella putrefaciens (strain CN-32 / ATCC BAA-453).